We begin with the raw amino-acid sequence, 623 residues long: Phosphoglucomutase, chloroplastic (623 aa).

The transit peptide at 1–63 directs the protein to the chloroplast; the sequence is MTSTYTRFDT…SSSSSSVVAG (63 aa). Alpha-D-glucose 1,6-bisphosphate-binding residues include Arg88 and Ser181. The Phosphoserine intermediate role is filled by Ser181. Mg(2+) contacts are provided by Ser181, Asp346, Asp348, and Asp350. Ser181 is modified (phosphoserine). Asp350, Arg351, Thr414, Glu433, Ser435, and Lys446 together coordinate alpha-D-glucose 1,6-bisphosphate.

Belongs to the phosphohexose mutase family. In terms of assembly, monomer. Mg(2+) is required as a cofactor. In terms of tissue distribution, expressed in flowers, siliques and germinating seeds.

It localises to the plastid. The protein resides in the chloroplast. The catalysed reaction is alpha-D-glucose 1-phosphate = alpha-D-glucose 6-phosphate. It catalyses the reaction O-phospho-L-seryl-[protein] + alpha-D-glucose 1-phosphate = alpha-D-glucose 1,6-bisphosphate + L-seryl-[protein]. The enzyme catalyses alpha-D-glucose 1,6-bisphosphate + L-seryl-[protein] = O-phospho-L-seryl-[protein] + alpha-D-glucose 6-phosphate. With respect to regulation, inhibited by the Calvin cycle intermediates fructose-1,6-bisphosphate and ribulose-1,5-bisphosphate. In terms of biological role, catalyzes the reversible isomerization of alpha-D-glucose 1-phosphate to alpha-D-glucose 6-phosphate. The mechanism proceeds via the intermediate compound alpha-D-glucose 1,6-bisphosphate. This enzyme participates in both the breakdown and synthesis of glucose. Factor that affects seed oil content. Accumulated starch in young embryos may play an important role in providing carbon resources for seed storage lipid biosynthesis in oilseed plants. Promotes gravitropic responses, negative in shoots but positive in roots, by facilitating starch granules (statoliths) formation in hypocotyls and roots columella. The polypeptide is Phosphoglucomutase, chloroplastic (Arabidopsis thaliana (Mouse-ear cress)).